Consider the following 184-residue polypeptide: Nucleoporin-62 C-terminal-like protein (184 aa).

Positions 117–151 (RILHGEVNKVKLDQKRLEQELDFILSQQQELEFLL) form a coiled coil.

This sequence belongs to the nucleoporin NSP1/NUP62 family.

This chain is Nucleoporin-62 C-terminal-like protein (NUP62CL), found in Homo sapiens (Human).